We begin with the raw amino-acid sequence, 385 residues long: Prostacyclin receptor (385 aa).

Residues 1–16 (MADSCRNLTYVRDSVG) lie on the Extracellular side of the membrane. 2 disulfide bridges follow: Cys5-Cys165 and Cys92-Cys170. Asn7 carries an N-linked (GlcNAc...) asparagine glycan. A helical membrane pass occupies residues 17-38 (PATSTLMFVAGVVGNGLALGIL). Residues 39–51 (GARRHSRPSAFAV) lie on the Cytoplasmic side of the membrane. The chain crosses the membrane as a helical span at residues 52–76 (LVTGLGVTDLLGTCFLSPAVFAAYA). Residues 77 to 94 (RNSSLLGLARGRPALCDA) are Extracellular-facing. Residues 95–115 (FAFAMTFFGLASTLILFAMAV) form a helical membrane-spanning segment. The Cytoplasmic segment spans residues 116–134 (ERCLALSHPYLYAQLDGPR). Residues 135–158 (RARLALPAIYAFCTIFCSLPFLGL) traverse the membrane as a helical segment. Residues 159–181 (GQHQQYCPGSWCFIRMRSAEPGG) are Extracellular-facing. The chain crosses the membrane as a helical span at residues 182–208 (CAFLLAYASLVALLVAAIVLCNGSVTL). Over 209–234 (SLCRMYRQQRRHQARCPRPRAGEDEV) the chain is Cytoplasmic. The chain crosses the membrane as a helical span at residues 235-259 (DHLILLALMTGIMAVCSLPLTPQIR). The Extracellular segment spans residues 260 to 273 (GFTQAIAPDSSEMG). The chain crosses the membrane as a helical span at residues 274-294 (DLLAFRFNAFNPILDPWVFIL). Residues 295–385 (FRKSVFQRLK…AGSEAACSLC (91 aa)) are Cytoplasmic-facing. The segment at 315 to 344 (AQGDSRTSLSQSASGRKDSSAPPALEGKKG) is disordered. Residues 318–328 (DSRTSLSQSAS) show a composition bias toward polar residues. At Cys382 the chain carries Cysteine methyl ester. A lipid anchor (S-farnesyl cysteine) is attached at Cys382. Residues 383–385 (SLC) constitute a propeptide, removed in mature form.

It belongs to the G-protein coupled receptor 1 family. As to quaternary structure, interacts (non-isoprenylated C-terminus) with PDZK1. Isoprenylation does not influence ligand binding but is required for efficient coupling to the effectors adenylyl cyclase and phospholipase C.

It localises to the cell membrane. Receptor for prostacyclin (prostaglandin I2 or PGI2). The activity of this receptor is mediated by G(s) proteins which activate adenylate cyclase. The polypeptide is Prostacyclin receptor (PTGIR) (Bos taurus (Bovine)).